Consider the following 453-residue polypeptide: Tryptophan dimethylallyltransferase cnsF (453 aa).

Residues I84–L85 and E93 each bind L-tryptophan. Residues R104, K190, and Y192 each coordinate substrate. Residues Y194 and R248 each coordinate L-tryptophan. 5 residues coordinate substrate: R261, K263, Y265, Q347, and Y349.

The protein belongs to the tryptophan dimethylallyltransferase family. In terms of assembly, homodimer.

The catalysed reaction is L-tryptophan + dimethylallyl diphosphate = 4-(3-methylbut-2-enyl)-L-tryptophan + diphosphate. The protein operates within alkaloid biosynthesis. In terms of biological role, tryptophan dimethylallyltransferase; part of the gene cluster that mediates the biosynthesis of communesins, a prominent class of indole alkaloids with great potential as pharmaceuticals. Communesins are biosynthesized by the coupling of tryptamine and aurantioclavine, two building blocks derived from L-tryptophan. The L-tryptophan decarboxylase cnsB converts L-tryptophan to tryptamine, whereas the tryptophan dimethylallyltransferase cnsF converts L-tryptophan to 4-dimethylallyl tryptophan which is further transformed to aurantioclavine by the aurantioclavine synthase cnsA, probably aided by the catalase cnsD. The cytochrome P450 monooxygenase cnsC catalyzes the heterodimeric coupling between the two different indole moieties, tryptamine and aurantioclavine, to construct vicinal quaternary stereocenters and yield the heptacyclic communesin scaffold. The O-methyltransferase cnsE then methylates the communesin scaffold to produce communesin K, the simplest characterized communesin that contains the heptacyclic core. The dioxygenase cnsJ converts communesin K into communesin I. Acylation to introduce the hexadienyl group at position N16 of communesin I by the acyltransferase cnsK leads to the production of communesin B. The hexadienyl group is produced by the highly reducing polyketide synthase cnsI, before being hydrolytically removed from cnsI by the serine hydrolase cnsH, converted into hexadienyl-CoA by the CoA ligase cnsG, and then transferred to communesin I by cnsK. Surprisingly, cnsK may also be a promiscuous acyltransferase that can tolerate a range of acyl groups, including acetyl-, propionyl-, and butyryl-CoA, which lead to communesins A, G and H respectively. The roles of the alpha-ketoglutarate-dependent dioxygenases cnsM and cnsP have still to be determined. This is Tryptophan dimethylallyltransferase cnsF from Penicillium expansum (Blue mold rot fungus).